The primary structure comprises 204 residues: MKKLTSQISLFDHETGQLVAGVDEVGRGPLAGPVVAAAVILNPEKPIEGLNDSKKLSHRQRVALSQEIREKALAWATGWATVEEIDQINILQASLLAMQRAVAGLQVAPDLALIDGNKIPKLDMPAEAIVKGDSKVAAIAAASILAKVERDEELDRLDVIFPGYGLAGHKGYPTAQHLSALRELGVTDIHRRSYKPVQQLLQGD.

Positions 17–204 (QLVAGVDEVG…KPVQQLLQGD (188 aa)) constitute an RNase H type-2 domain. 3 residues coordinate a divalent metal cation: Asp-23, Glu-24, and Asp-115.

This sequence belongs to the RNase HII family. The cofactor is Mn(2+). It depends on Mg(2+) as a cofactor.

The protein resides in the cytoplasm. The catalysed reaction is Endonucleolytic cleavage to 5'-phosphomonoester.. Endonuclease that specifically degrades the RNA of RNA-DNA hybrids. The sequence is that of Ribonuclease HII from Hahella chejuensis (strain KCTC 2396).